A 504-amino-acid chain; its full sequence is MPADSTQDEDAVLSYGMKLTWDINDPQMPQEPTHFDHFREWPDGYVRFIYSSQEKKAQRHLSGWAMRNTNNHNGHILKKSCLGVVVCARACALKDGSHLQLRPAICDKARLKQQKKACPNCHSPLELVPCRGHSGYPVTNFWRLDGNAIFFQAKGVHDHPRPESKSETEGRRSALKRQMASFYQPQKRRSEEPEARSTQDIRGHLNSTAALEPTELFDMTADTSFPIPGQPSPSFPNSDVHRVTCDLPTFQGDIILPFQKYPNPSIYFPGPPWGYELASSGVTGSSPYSTLYKDSSVVPDDPDWIPLNSLQYNVSSYGSYERTLDFTARYHSWKPTHGKPSLEEKVDCEQCQAVPTSPYYNLELPCRYLPVPAAGTQALQTVITTTVAYQAYQHPALKHSDSMQEVSSLASCTYASENLPMPIYPPALDPQEGVIQAASPSGRAPLKVPGDCQAPRPTLDFPQEADPSGTDGADVWDVCLSGVGSVMGYLDRTGQPFSFDNEDF.

Residues 19–174 (LTWDINDPQM…KSETEGRRSA (156 aa)) constitute a DNA-binding region (GCM). Zn(2+) is bound by residues Cys81, Cys87, Cys91, Cys118, Cys121, Cys130, His157, and His159. Basic and acidic residues-rich tracts occupy residues 155–172 (GVHD…EGRR) and 188–203 (RRSE…DIRG). Residues 155–203 (GVHDHPRPESKSETEGRRSALKRQMASFYQPQKRRSEEPEARSTQDIRG) are disordered. Residues 379-393 (LQTVITTTVAYQAYQ) form a C-terminal conserved inhibitory domain (CCID) region. Positions 438–472 (ASPSGRAPLKVPGDCQAPRPTLDFPQEADPSGTDG) are disordered.

Its subcellular location is the nucleus. In terms of biological role, transcription factor that binds specific sequences on gene promoters and activate their transcription. Through the regulation of gene transcription, may play a role in parathyroid gland development. In Mus musculus (Mouse), this protein is Chorion-specific transcription factor GCMb.